The chain runs to 285 residues: Inositol oxygenase (285 aa).

A substrate-binding site is contributed by Arg-29. A Phosphoserine modification is found at Ser-33. Asp-85 to Ser-87 provides a ligand contact to substrate. Positions 98, 123, and 124 each coordinate Fe cation. Substrate-binding positions include Lys-127 and Gly-141 to Asp-142. Fe cation is bound by residues His-194, His-220, and Asp-253. Residue His-220–Ser-221 coordinates substrate.

The protein belongs to the myo-inositol oxygenase family. It depends on Fe cation as a cofactor.

The protein resides in the cytoplasm. It carries out the reaction myo-inositol + O2 = D-glucuronate + H2O + H(+). It participates in polyol metabolism; myo-inositol degradation into D-glucuronate; D-glucuronate from myo-inositol: step 1/1. In Pongo abelii (Sumatran orangutan), this protein is Inositol oxygenase (MIOX).